A 369-amino-acid polypeptide reads, in one-letter code: Coiled-coil domain-containing protein 149 (369 aa).

Residues 1 to 249 are a coiled coil; the sequence is MKENNNAEIL…AKYKQMAEAV (249 aa).

Belongs to the CCDC149 family. As to expression, expressed in amphid and phasmid ciliated neurons, and also pharyngeal, touch receptor and motor neurons.

Its subcellular location is the cell projection. It is found in the cilium. This chain is Coiled-coil domain-containing protein 149, found in Caenorhabditis elegans.